The primary structure comprises 304 residues: Ribonuclease HII (304 aa).

The tract at residues 1–53 (MIRDTKQPIKVPAKPASRSGGKAKTVKPKTVKPKAVKAADGKAASAKASTSKA) is disordered. Positions 24–35 (KTVKPKTVKPKA) are enriched in basic residues. Low complexity predominate over residues 36 to 53 (VKAADGKAASAKASTSKA). The RNase H type-2 domain occupies 96 to 284 (WPIAGCDEAG…VAAAWQKIEG (189 aa)). Residues Asp102, Glu103, and Asp193 each coordinate a divalent metal cation.

Belongs to the RNase HII family. Mn(2+) is required as a cofactor. It depends on Mg(2+) as a cofactor.

The protein localises to the cytoplasm. It carries out the reaction Endonucleolytic cleavage to 5'-phosphomonoester.. Endonuclease that specifically degrades the RNA of RNA-DNA hybrids. The sequence is that of Ribonuclease HII from Rhodopseudomonas palustris (strain ATCC BAA-98 / CGA009).